The primary structure comprises 339 residues: Dihydroorotate dehydrogenase (quinone) (339 aa).

Residues 64-68 (AGADK) and Thr88 each bind FMN. Lys68 contributes to the substrate binding site. Substrate is bound at residue 113–117 (NRNGF). FMN-binding residues include Asn141 and Asn174. Asn174 contributes to the substrate binding site. Catalysis depends on Ser177, which acts as the Nucleophile. Asn179 lines the substrate pocket. Lys219 and Thr247 together coordinate FMN. 248–249 (NT) contacts substrate. Residues Gly270, Gly299, and 320-321 (YS) each bind FMN.

The protein belongs to the dihydroorotate dehydrogenase family. Type 2 subfamily. In terms of assembly, monomer. FMN is required as a cofactor.

The protein resides in the cell membrane. The catalysed reaction is (S)-dihydroorotate + a quinone = orotate + a quinol. Its pathway is pyrimidine metabolism; UMP biosynthesis via de novo pathway; orotate from (S)-dihydroorotate (quinone route): step 1/1. In terms of biological role, catalyzes the conversion of dihydroorotate to orotate with quinone as electron acceptor. The sequence is that of Dihydroorotate dehydrogenase (quinone) (pyrD) from Haemophilus influenzae (strain ATCC 51907 / DSM 11121 / KW20 / Rd).